Here is a 451-residue protein sequence, read N- to C-terminus: Glycylpeptide N-tetradecanoyltransferase (451 aa).

Tetradecanoyl-CoA-binding positions include 34-37, 167-169, and 175-179; these read YKFW, LCV, and SKRLT. Residue Leu-451 is the Proton acceptor; via carboxylate of the active site.

This sequence belongs to the NMT family. As to quaternary structure, monomer.

The protein localises to the cytoplasm. It catalyses the reaction N-terminal glycyl-[protein] + tetradecanoyl-CoA = N-tetradecanoylglycyl-[protein] + CoA + H(+). Adds a myristoyl group to the N-terminal glycine residue of certain cellular proteins. The protein is Glycylpeptide N-tetradecanoyltransferase (NMT1) of Candida glabrata (strain ATCC 2001 / BCRC 20586 / JCM 3761 / NBRC 0622 / NRRL Y-65 / CBS 138) (Yeast).